The following is a 196-amino-acid chain: Large ribosomal subunit protein uL10 (196 aa).

The disordered stretch occupies residues 163-196 (GAPAAAEAPAAEEAPAAEAAETEAPAEAAATEEN). The segment covering 164–196 (APAAAEAPAAEEAPAAEAAETEAPAEAAATEEN) has biased composition (low complexity).

The protein belongs to the universal ribosomal protein uL10 family. As to quaternary structure, part of the ribosomal stalk of the 50S ribosomal subunit. The N-terminus interacts with L11 and the large rRNA to form the base of the stalk. The C-terminus forms an elongated spine to which L12 dimers bind in a sequential fashion forming a multimeric L10(L12)X complex.

Functionally, forms part of the ribosomal stalk, playing a central role in the interaction of the ribosome with GTP-bound translation factors. This Arthrobacter sp. (strain FB24) protein is Large ribosomal subunit protein uL10.